The chain runs to 392 residues: Monooxygenase AgnR1 (392 aa).

Residues 1 to 20 form the signal peptide; the sequence is MSAPQKCAAVVVGAGPAGLA. The N-linked (GlcNAc...) asparagine glycan is linked to N134.

In terms of biological role, monooxygenase; part of the gene cluster that mediates the biosynthesis of agnestins, dihydroxy-xanthone metabolites. The pathway begins with the assembly and cyclization of atrochrysone thioester by the non-reducing polyketide synthase Agnpks1. The atrochrysone carboxyl ACP thioesterase AgnL7 then breaks the thioester bond and releases the atrochrysone carboxylic acid as the first enzyme-free intermediate. The decarboxylase AgnL1 then catalyzes the concerted decarboxylation-elimination required to convert atochrysone carboxylic acid into emodin anthrone, which is further oxidized to emodin by the anthrone oxygenase AgnL2. Emodin then undergoes reduction catalyzed by the oxidoreductase AgnL4 to yield the dihydroquinone tautomer which is the substrate for reduction by the short chain dehydrogenase AgnL6 reduction to produce hydroxyketone, followed by AgnL8 dehydration and likely spontaneous autoxidation to chrysophanol. Baeyer-Villiger oxidation by the oxidase AgnL3 leads to monodictyphenone via cleavage of the C-10/C-10a bond of chrysophanol. Alternative cleavage at the C-4a/C-10 bond of chrysophanol also leads to the formation some cephalone F. Further conversion to agnestins A and B, requires reduction to dihydro-monodictyphenone, oxidation to agnestin C probably via an epoxide, and rearrangement to either agnestin A or agnestin B directly, although agnestin A or agnestin B can also interconvert. Within the cluster, AgnR1 is the only unassigned oxidoreductase present which could be involved in this conversion. However, AgnR1 seems not to be involved in this step, and thus genes involved in the proposed oxidation/reduction may be located elsewhere on the genome. Further agnestin A derivatives are probably formed by spontaneous decarboxylations, dehydrations and methanolysis reactions. In Paecilomyces divaricatus (Penicillium divaricatum), this protein is Monooxygenase AgnR1.